A 356-amino-acid chain; its full sequence is GTPase Obg (356 aa).

The Obg domain occupies 2–160 (ESFVDEVAIE…KFLRLSLKLL (159 aa)). The OBG-type G domain maps to 161–329 (ADVGIVGLPN…LLENMDEVFF (169 aa)). Residues 167 to 174 (GLPNAGKS), 192 to 196 (FTTLS), 215 to 218 (DIPG), 282 to 285 (NKID), and 310 to 312 (SAD) each bind GTP. Mg(2+)-binding residues include S174 and T194.

This sequence belongs to the TRAFAC class OBG-HflX-like GTPase superfamily. OBG GTPase family. In terms of assembly, monomer. The cofactor is Mg(2+).

It localises to the cytoplasm. In terms of biological role, an essential GTPase which binds GTP, GDP and possibly (p)ppGpp with moderate affinity, with high nucleotide exchange rates and a fairly low GTP hydrolysis rate. Plays a role in control of the cell cycle, stress response, ribosome biogenesis and in those bacteria that undergo differentiation, in morphogenesis control. The protein is GTPase Obg of Leptospira interrogans serogroup Icterohaemorrhagiae serovar copenhageni (strain Fiocruz L1-130).